The primary structure comprises 132 residues: Fatty acid-binding protein (132 aa).

Residues Arg107 and 127–129 contribute to the (5Z,8Z,11Z,14Z)-eicosatetraenoate site; that span reads RNY. (9Z)-octadecenoate-binding positions include Arg107 and 127–129; that span reads RNY.

Belongs to the calycin superfamily. Fatty-acid binding protein (FABP) family.

It is found in the cytoplasm. Its function is as follows. May play a role in the transport of fatty acids. Binds to various fatty acids but not retinoids. In Schistosoma japonicum (Blood fluke), this protein is Fatty acid-binding protein.